Here is a 415-residue protein sequence, read N- to C-terminus: Squalene synthase 10 (415 aa).

2 helical membrane passes run A281–F301 and L392–P412.

It belongs to the phytoene/squalene synthase family. Mg(2+) serves as cofactor. The cofactor is Mn(2+).

Its subcellular location is the endoplasmic reticulum membrane. It carries out the reaction 2 (2E,6E)-farnesyl diphosphate + NADH + H(+) = squalene + 2 diphosphate + NAD(+). It catalyses the reaction 2 (2E,6E)-farnesyl diphosphate + NADPH + H(+) = squalene + 2 diphosphate + NADP(+). The protein operates within terpene metabolism; lanosterol biosynthesis; lanosterol from farnesyl diphosphate: step 1/3. In terms of biological role, component of the triterpene saponins (e.g. ginsenosides or panaxosides) and phytosterols biosynthetic pathways. Catalyzes the biosynthesis of squalene. This Panax ginseng (Korean ginseng) protein is Squalene synthase 10.